Here is a 376-residue protein sequence, read N- to C-terminus: DNA replication and repair protein RecF (376 aa).

Position 30–37 (30–37 (GHNGVGKT)) interacts with ATP.

This sequence belongs to the RecF family.

It localises to the cytoplasm. Functionally, the RecF protein is involved in DNA metabolism; it is required for DNA replication and normal SOS inducibility. RecF binds preferentially to single-stranded, linear DNA. It also seems to bind ATP. The protein is DNA replication and repair protein RecF of Salinispora arenicola (strain CNS-205).